A 339-amino-acid chain; its full sequence is GATA transcription factor 5 (339 aa).

Disordered regions lie at residues 68-88 (MVRVSSEEPNDDGDALRRSSD), 126-145 (EYSGPNLTGTPTEKPAWLTG), 163-206 (PVPA…PSSP), and 221-242 (ERPPFPKKHKKRSAESVFSGEL). Positions 126–136 (EYSGPNLTGTP) are enriched in polar residues. Positions 167–174 (KARSKRNR) match the Nuclear localization signal motif. The span at 181 to 206 (SLGSSSSSGPSSSGSTSSSSSGPSSP) shows a compositional bias: low complexity. The GATA-type zinc finger occupies 245–299 (LQPQRKCSHCGVQKTPQWRAGPMGAKTLCNACGVRYKSGRLLPEYRPACSPTFSS). The disordered stretch occupies residues 314–339 (RKKEPTSDNETGLNQLVQSPQAVPSF). A compositionally biased stretch (polar residues) spans 321-339 (DNETGLNQLVQSPQAVPSF).

Belongs to the type IV zinc-finger family. Class A subfamily.

The protein resides in the nucleus. Transcriptional activator that specifically binds 5'-GATA-3' or 5'-GAT-3' motifs within gene promoters. May be involved in the regulation of some light-responsive genes. The chain is GATA transcription factor 5 (GATA5) from Arabidopsis thaliana (Mouse-ear cress).